The following is a 342-amino-acid chain: Ferredoxin--NADP reductase (342 aa).

FAD-binding residues include cysteine 17, aspartate 36, glutamine 44, tyrosine 49, valine 89, phenylalanine 124, aspartate 289, and threonine 330.

It belongs to the ferredoxin--NADP reductase type 2 family. As to quaternary structure, homodimer. FAD serves as cofactor.

It catalyses the reaction 2 reduced [2Fe-2S]-[ferredoxin] + NADP(+) + H(+) = 2 oxidized [2Fe-2S]-[ferredoxin] + NADPH. The chain is Ferredoxin--NADP reductase from Nitrobacter hamburgensis (strain DSM 10229 / NCIMB 13809 / X14).